Reading from the N-terminus, the 154-residue chain is 3-dehydroquinate dehydratase (154 aa).

The active-site Proton acceptor is the tyrosine 22. Residues asparagine 73, histidine 79, and aspartate 86 each contribute to the substrate site. Residue histidine 99 is the Proton donor of the active site. Substrate-binding positions include 100 to 101 (LS) and arginine 110.

It belongs to the type-II 3-dehydroquinase family. As to quaternary structure, homododecamer.

It catalyses the reaction 3-dehydroquinate = 3-dehydroshikimate + H2O. The protein operates within metabolic intermediate biosynthesis; chorismate biosynthesis; chorismate from D-erythrose 4-phosphate and phosphoenolpyruvate: step 3/7. Catalyzes a trans-dehydration via an enolate intermediate. The chain is 3-dehydroquinate dehydratase from Carboxydothermus hydrogenoformans (strain ATCC BAA-161 / DSM 6008 / Z-2901).